Reading from the N-terminus, the 1576-residue chain is eIF-2-alpha kinase GCN2 (1576 aa).

The RWD domain occupies 16–127; it reads NEIEALKAIF…SIVQDYLNDW (112 aa). The segment at 180–204 is disordered; sequence QDELQRRSYETPQSSSKKKTNSKET. 2 Protein kinase domains span residues 235–511 and 556–928; these read VLPL…HVIR and FEEL…EEFI. ATP is bound by residues 562–570 and Lys-585; that span reads LGRGGFGEV. The segment at 673–714 is disordered; the sequence is YNSSADEEDPEASDISFQYSNTSDKEGSSDKDSSIEEASSVK. Residues 695-706 show a composition bias toward basic and acidic residues; sequence SDKEGSSDKDSS. The active-site Proton acceptor is Asp-772.

It belongs to the protein kinase superfamily. Ser/Thr protein kinase family. GCN2 subfamily. As to quaternary structure, homodimer; homodimerization is important for kinase activation by uncharged tRNAs. Interacts (via N-terminal RWD domain) with gcn1 (via N- and C-terminus); this interaction stimulates gcn2 kinase activity in a gcn20-dependent manner in response to amino acid starvation. Interacts (via N-terminus) with the gcn1-gcn20 complex on translating ribosomes in amino acid-starved cells; gcn1 may bind near the ribosomal A-site and promotes the transfer of uncharged tRNAs from the A-site to the tRNA-binding domain in gcn2 for its subsequent kinase activation, and hence allowing fil1 translational activation and derepression of amino acid biosynthetic genes. Autophosphorylated.

Its subcellular location is the cytoplasm. The catalysed reaction is L-seryl-[protein] + ATP = O-phospho-L-seryl-[protein] + ADP + H(+). It carries out the reaction L-threonyl-[protein] + ATP = O-phospho-L-threonyl-[protein] + ADP + H(+). The integrated stress response (ISR) is activated in response to conditions that promote ribosome collisions: gcn1, which acts as a ribosome collision sensor, activates gcn2. The RQC pathway and the integrated stress response (ISR) antagonize each other: hel2 prevents the activation of gcn2, while gcn2 suppresses RQC activation. Ribosome stalling-induced integrated stress response prefers ribosomes with empty A sites. The kinase activity is stimulated upon binding to uncharged tRNAs. Metabolic-stress sensing protein kinase that phosphorylates the alpha subunit of eukaryotic translation initiation factor 2 (eIF-2-alpha/SUI2) on 'Ser-52' in response to low amino acid, carbon, or purine availability. Required for adapatation to nutrient starvation by acting as a key component of the integrated stress response (ISR), by which cells alter their translational and transcriptional output in response to starvation. Converts phosphorylated eIF-2-alpha/SUI2 either to a competitive inhibitor of translation initiation factor eIF-2B, leading to a global protein synthesis repression, and thus to a reduced overall utilization of amino acids, or to a translational initiation activation of specific mRNAs, such as the transcriptional activator GCN4, and hence allowing GCN4-mediated reprogramming of transcription to alleviate nutrient depletion. Binds uncharged tRNAs. In Schizosaccharomyces pombe (strain 972 / ATCC 24843) (Fission yeast), this protein is eIF-2-alpha kinase GCN2.